Reading from the N-terminus, the 1450-residue chain is MEAGYAEIAAVQFNIAGDNDHKRQGVMEVTISNLFEGTLPAEGGIYDARMGTTDHHYKCITCSHQRKQCMGHPGILQMHAPVLQPLFIAEIRRWLRVICLNCGAPIVDLKRYEHLIRPKRLIEAASSQTEGKQCYVCKTVHPKIIKDSEDYFTFWVDQQGKIDKLYPQIIREIFSRVTYDTVVKLGRSKNSHPEKLVLKAIQIPPISIRPGIRLGIGSGPQSFHDINNVIQYLVRKNLLIPKDLQIVRGQKIPLNIDRNLQTIQQLYYNFLLDSVSTTATQGGTGKRGIVMGARPAPSIMRRLPRKEGRIRKSLLGSQVWSISRSTICGNSDLHLDEVGYPISFARTLQVAETVQHYNINRLMPYFLNGKRQYPGCSRVYKQITQSVHDIEGLKQDFRLEVGDILYRDVVTGDVAFFNRQPSLERSSIGVHRIVVLENPKISTFQMNVSACAWYNADFDGDQMNLWVPWSVMSRVEAELLCSVRNWFISTKSSGPVNGQVQDSTVGSFLLTRTNTPMGKNVMNKLHAMGLFQTTQTDPPCFANYSPTDLLDGKSVVSMLLRQTPINYQRAPTWYSEVYAPYMHYNKQDISTQIRNGELIEGVLDKKAVGAGSSGGIYHLISRRYGPQQALKMIFATQQLALNYVRNAGFTVSTADMLLTPEAHQEVQEIINELLLESEEINNRLLHGDIMPPIGLTTHDFYEKLQLNALKFPDRILKPIMNSINPETNGLFQMVATGAKGSNPNMIHIMAGIGQIEINTQRIQPQFSFGRTLVYYPRFALEAQAYGFICNSYIAGLTSPEFIFGEMNGRFDLINKALSTSSTGYANRKAIFGLQSCIVDYYRRVSIDTRLVQQLYGEDGLDARQLETVRFETIMLSDQELEDKFKYTGIQSPLFEEEFSRLKKDRDKYRQIFLNIENFNFSQLLTDVRQVPVNVASIVKNILLSSATGVLPFDEKTILQKYTMVKTFCKNLPYVFINNIQERLQTPIPVYLKRAASLMRMLIRIELATVKTLNITCEQMSAILDLIRLQYTQSLINYGEAVGILAAQSVSEPLTQYMLDSHHRSVAGGTNKSGIVRPQEIFSAKPVEAEQSSEMLLRLKNPEVETNKTYAQEIANSIELITFERLILQWHLLYETYSSTKKNVMYPDFASDVEWMTDFLENHPLLQPPEDIANWCIRLELNKTTMILKSISLESIINSLRAKHPNTYIMHSVENTASGIPIIIRIYLRESAFRRSTNTRMATDEKIAVNVVDKLLNSTIRGIPGIKNANVVKLMRHRVDAQGKLVRLDNIYAIKTNGTNIFGAMLDDNIDPYTIVSSSIGDTMELYGIEAARQKIISEIRTVMGDKGPNHRHLLMYADLMTRTGQVTSLEKAGLNAREPSNVLLRMALSSPVQVLTDAAVDSAVNPIYGIAAPTLMGSVPRIGTMYSDIIMDEKYITENYKSVDSMIDML.

This sequence belongs to the RNA polymerase beta' chain family. Part of the viral DNA-directed RNA polymerase that consists of 8 polII-like subunits (RPB1, RPB2, RPB3, RPB5, RPB6, RPB7, RPB9, RPB10), a capping enzyme and a termination factor.

It localises to the virion. It catalyses the reaction RNA(n) + a ribonucleoside 5'-triphosphate = RNA(n+1) + diphosphate. Functionally, catalytic component of the DNA-directed RNA polymerase (RNAP) that catalyzes the transcription in the cytoplasm of viral DNA into RNA using the four ribonucleoside triphosphates as substrates. Forms the polymerase active center together with RPB2. Part of the core element with the central large cleft, the clamp element that moves to open and close the cleft and the jaws that are thought to grab the incoming DNA template. The chain is DNA-directed RNA polymerase RPB1 homolog from African swine fever virus (isolate Tick/South Africa/Pretoriuskop Pr4/1996) (ASFV).